The chain runs to 831 residues: Phenylalanine--tRNA ligase beta subunit (831 aa).

A tRNA-binding domain is found at 42 to 157 (ADISGPIVVG…GFAEPGTKAD (116 aa)). The region spanning 408 to 483 (VPREPIVVRA…RNEGYENIPA (76 aa)) is the B5 domain. Asp-461, Asp-467, Glu-470, and Glu-471 together coordinate Mg(2+). The FDX-ACB domain maps to 737 to 830 (STYPVATQDV…AAERTGAVLR (94 aa)).

It belongs to the phenylalanyl-tRNA synthetase beta subunit family. Type 1 subfamily. As to quaternary structure, tetramer of two alpha and two beta subunits. Mg(2+) is required as a cofactor.

The protein localises to the cytoplasm. The enzyme catalyses tRNA(Phe) + L-phenylalanine + ATP = L-phenylalanyl-tRNA(Phe) + AMP + diphosphate + H(+). This is Phenylalanine--tRNA ligase beta subunit from Thermobifida fusca (strain YX).